Consider the following 429-residue polypeptide: N5-carboxyaminoimidazole ribonucleotide synthase (429 aa).

ATP-binding positions include Lys117, Lys157, 194-197 (EERV), Glu202, and 280-281 (NE). The 190-residue stretch at 121-310 (RQRLAAAGVA…QFEQHLRAVL (190 aa)) folds into the ATP-grasp domain. Positions 406-429 (RASDDAVGVPPACGGRSDEEERRL) are disordered.

Belongs to the PurK/PurT family. Homodimer.

The catalysed reaction is 5-amino-1-(5-phospho-beta-D-ribosyl)imidazole + hydrogencarbonate + ATP = 5-carboxyamino-1-(5-phospho-D-ribosyl)imidazole + ADP + phosphate + 2 H(+). The protein operates within purine metabolism; IMP biosynthesis via de novo pathway; 5-amino-1-(5-phospho-D-ribosyl)imidazole-4-carboxylate from 5-amino-1-(5-phospho-D-ribosyl)imidazole (N5-CAIR route): step 1/2. In terms of biological role, catalyzes the ATP-dependent conversion of 5-aminoimidazole ribonucleotide (AIR) and HCO(3)(-) to N5-carboxyaminoimidazole ribonucleotide (N5-CAIR). In Mycobacterium bovis (strain ATCC BAA-935 / AF2122/97), this protein is N5-carboxyaminoimidazole ribonucleotide synthase.